A 239-amino-acid polypeptide reads, in one-letter code: MKFSTALSVALFALAKMVIADSEEFGLVSIRSGSDLQYLSVYSDNGTLKLGSGSGSFEATITDDGKLKFDDDKYAVVNEDGSFKEGSESDAATGFSIKDGHLNYKSSSGFYAIKDGSSYIFSSKQSDDATGVAIRPTSKSGSVAADFSPSDSSSSSSASASSASASSSTKHSSSIESVETSTTVETSSASSPTASVISQITDGQIQAPNTVYEQTENAGAKAAVGMGAGALAVAAAYLL.

A signal peptide spans 1 to 20; the sequence is MKFSTALSVALFALAKMVIA. The tract at residues 131-196 is disordered; it reads GVAIRPTSKS…SSASSPTASV (66 aa). Residues 142-196 are compositionally biased toward low complexity; that stretch reads SVAADFSPSDSSSSSSASASSASASSSTKHSSSIESVETSTTVETSSASSPTASV. The PIR1/2/3 repeat unit spans residues 194–212; it reads ASVISQITDGQIQAPNTVY. A lipid anchor (GPI-anchor amidated asparagine) is attached at N217. Residues 218–239 constitute a propeptide, removed in mature form; the sequence is AGAKAAVGMGAGALAVAAAYLL.

Belongs to the SRP1/TIP1 family. Post-translationally, extensively O-glycosylated. In terms of processing, the GPI-anchor is attached to the protein in the endoplasmic reticulum and serves to target the protein to the cell surface. There, the glucosamine-inositol phospholipid moiety is cleaved off and the GPI-modified mannoprotein is covalently attached via its lipidless GPI glycan remnant to the 1,6-beta-glucan of the outer cell wall layer. Covalently linked to beta-1,3-glucan of the inner cell wall layer via an alkali-sensitive ester linkage between the gamma-carboxyl group of glutamic acids, arising from a specific glutamine within the PIR1/2/3 repeat, and hydroxyl groups of glucoses of beta-1,3-glucan chains. The alkali-sensitive linkage is induced by low pH.

Its subcellular location is the secreted. It is found in the cell wall. The protein resides in the membrane. In terms of biological role, component of the cell wall. The sequence is that of Cell wall protein CWP1 (CWP1) from Saccharomyces cerevisiae (strain ATCC 204508 / S288c) (Baker's yeast).